The primary structure comprises 348 residues: Spermatogenesis-associated protein 32 (348 aa).

Residues 27–36 (YHHHHHPLED) show a composition bias toward basic and acidic residues. Residues 27 to 61 (YHHHHHPLEDNKDEDNEMGTELSSMKPPPKVDPDP) form a disordered region. Phosphoserine is present on residues serine 149 and serine 152. The segment at 308 to 329 (APATSPELQEDKDDSVPGTKKG) is disordered. Threonine 330 carries the phosphothreonine modification.

Interacts with syntaxin-1 and ACTB. In terms of tissue distribution, abundantly expressed in testes. Expressed in germ cells, but not in Sertoli or Leydig cells of the adult testis. Localized at the acrosomal region of the round and elongated spermatids at stages VIII-X.

The protein is Spermatogenesis-associated protein 32 (Spata32) of Rattus norvegicus (Rat).